The chain runs to 240 residues: Ribosomal RNA small subunit methyltransferase I (240 aa).

It belongs to the methyltransferase superfamily. RsmI family.

Its subcellular location is the cytoplasm. The enzyme catalyses cytidine(1402) in 16S rRNA + S-adenosyl-L-methionine = 2'-O-methylcytidine(1402) in 16S rRNA + S-adenosyl-L-homocysteine + H(+). In terms of biological role, catalyzes the 2'-O-methylation of the ribose of cytidine 1402 (C1402) in 16S rRNA. The chain is Ribosomal RNA small subunit methyltransferase I from Leptospira biflexa serovar Patoc (strain Patoc 1 / ATCC 23582 / Paris).